Reading from the N-terminus, the 107-residue chain is Phosphoribosyl-ATP pyrophosphatase (107 aa).

This sequence belongs to the PRA-PH family.

The protein resides in the cytoplasm. The catalysed reaction is 1-(5-phospho-beta-D-ribosyl)-ATP + H2O = 1-(5-phospho-beta-D-ribosyl)-5'-AMP + diphosphate + H(+). The protein operates within amino-acid biosynthesis; L-histidine biosynthesis; L-histidine from 5-phospho-alpha-D-ribose 1-diphosphate: step 2/9. This is Phosphoribosyl-ATP pyrophosphatase from Bacillus cereus (strain ZK / E33L).